The following is a 469-amino-acid chain: 3-isopropylmalate dehydratase large subunit (469 aa).

Positions 350, 410, and 413 each coordinate [4Fe-4S] cluster.

It belongs to the aconitase/IPM isomerase family. LeuC type 1 subfamily. As to quaternary structure, heterodimer of LeuC and LeuD. [4Fe-4S] cluster is required as a cofactor.

It catalyses the reaction (2R,3S)-3-isopropylmalate = (2S)-2-isopropylmalate. It participates in amino-acid biosynthesis; L-leucine biosynthesis; L-leucine from 3-methyl-2-oxobutanoate: step 2/4. In terms of biological role, catalyzes the isomerization between 2-isopropylmalate and 3-isopropylmalate, via the formation of 2-isopropylmaleate. In Rhizobium leguminosarum bv. trifolii (strain WSM2304), this protein is 3-isopropylmalate dehydratase large subunit.